The primary structure comprises 254 residues: uncharacterized protein (254 aa).

This is an uncharacterized protein from Acheta domesticus (House cricket).